A 369-amino-acid chain; its full sequence is MASVQLRNVTKAWGDVVVSKDINLDIHDGEFVVFVGPSGCGKSTLLRMIAGLETITSGDLFIGETRMNDIPPVERGVGMVFQSYALYPHLSVAENMSFGLKLAGAKKEVMNQRVNQVAEVLQLAHLLERKPKALSGGQRQRVAIGRTLVAEPRVFLLDEPLSNLDAALRVQMRIEISRLHKRLGRTMIYVTHDQVEAMTLADKIVVLDAGRVAQVGKPLELYHYPADRFVAGFIGSPKMNFLPVKVTATAIEQVQVELPNRQQIWLPVESRGVQVGANMSLGIRPEHLLPSDIADVTLEGEVQVVEQLGHETQIHIQIPAIRQNLVYRQNDVVLVEEGATFAIGLPPERCHLFREDGSACRRLHQEPGV.

Residues 4–234 form the ABC transporter domain; that stretch reads VQLRNVTKAW…PADRFVAGFI (231 aa). 36-43 serves as a coordination point for ATP; sequence GPSGCGKS.

The protein belongs to the ABC transporter superfamily. Maltooligosaccharide importer (TC 3.A.1.1.1) family. As to quaternary structure, the complex is composed of two ATP-binding proteins (MalK), two transmembrane proteins (MalG and MalK) and a solute-binding protein (MalE).

The protein localises to the cell inner membrane. The catalysed reaction is D-maltose(out) + ATP + H2O = D-maltose(in) + ADP + phosphate + H(+). Functionally, part of the ABC transporter complex MalEFGK involved in maltose/maltodextrin import. Responsible for energy coupling to the transport system. The protein is Maltose/maltodextrin import ATP-binding protein MalK of Salmonella paratyphi A (strain ATCC 9150 / SARB42).